The sequence spans 361 residues: MIPKEEIMGIFEKYNKDEVTIVTVGSHTSLHILKGAKLEGFSTAVITTKDRAIPYKRFGVADKFIYVDQFSDISKEEIQQQLRDMNAIIVPHGSFIAYCGLDNVEDTFKVPMFGNRAILRWEAERDLEGQLLGGSGLRIPKKYGGPDEIDGPVMVKFPGARGGRGYFPCSSVEEFWRKIDEFKAKGVLTEDDVSKAHIEEYVVGANYCIHYFYSPLKDQVELMGIDRRYESSIDGLVRVPAKDQLELDIDPSYVITGNFPVVIRESLLPQVFDMGDKLVAKAKEEVNPGMLGPFCLQSLCNENLELVVFEMSARVDGGTNTFMNGSPYSCLYTGEPLSMGQRIAKEIKLALELDMIDKVIS.

Residues histidine 27 and serine 94 each coordinate 5-amino-1-(5-phospho-beta-D-ribosyl)imidazole-4-carboxamide. An ATP-grasp domain is found at 116–348 (RAILRWEAER…MGQRIAKEIK (233 aa)). Residues 146-208 (PDEI…ANYC) and glutamate 230 contribute to the ATP site. Asparagine 258 provides a ligand contact to 5-amino-1-(5-phospho-beta-D-ribosyl)imidazole-4-carboxamide. Glutamine 297 and glutamate 310 together coordinate Mg(2+).

The protein belongs to the phosphohexose mutase family. Mg(2+) is required as a cofactor. The cofactor is Mn(2+).

It carries out the reaction 5-amino-1-(5-phospho-beta-D-ribosyl)imidazole-4-carboxamide + formate + ATP = 5-formamido-1-(5-phospho-D-ribosyl)imidazole-4-carboxamide + ADP + phosphate. It participates in purine metabolism; IMP biosynthesis via de novo pathway; 5-formamido-1-(5-phospho-D-ribosyl)imidazole-4-carboxamide from 5-amino-1-(5-phospho-D-ribosyl)imidazole-4-carboxamide (formate route): step 1/1. Its function is as follows. Catalyzes the ATP- and formate-dependent formylation of 5-aminoimidazole-4-carboxamide-1-beta-d-ribofuranosyl 5'-monophosphate (AICAR) to 5-formaminoimidazole-4-carboxamide-1-beta-d-ribofuranosyl 5'-monophosphate (FAICAR) in the absence of folates. The sequence is that of 5-formaminoimidazole-4-carboxamide-1-(beta)-D-ribofuranosyl 5'-monophosphate synthetase from Methanococcus maripaludis (strain DSM 14266 / JCM 13030 / NBRC 101832 / S2 / LL).